The following is a 214-amino-acid chain: Uridine kinase (214 aa).

Residue 15-22 (GASASGKS) participates in ATP binding.

The protein belongs to the uridine kinase family.

It localises to the cytoplasm. It carries out the reaction uridine + ATP = UMP + ADP + H(+). It catalyses the reaction cytidine + ATP = CMP + ADP + H(+). It functions in the pathway pyrimidine metabolism; CTP biosynthesis via salvage pathway; CTP from cytidine: step 1/3. It participates in pyrimidine metabolism; UMP biosynthesis via salvage pathway; UMP from uridine: step 1/1. This chain is Uridine kinase, found in Aeromonas salmonicida (strain A449).